A 499-amino-acid polypeptide reads, in one-letter code: Protein nucleotidyltransferase YdiU (499 aa).

Positions 95, 97, 98, 117, 129, 130, 180, and 187 each coordinate ATP. Asp-256 serves as the catalytic Proton acceptor. 2 residues coordinate Mg(2+): Asn-257 and Asp-266. Residue Asp-266 coordinates ATP.

This sequence belongs to the SELO family. The cofactor is Mg(2+). Requires Mn(2+) as cofactor.

It carries out the reaction L-seryl-[protein] + ATP = 3-O-(5'-adenylyl)-L-seryl-[protein] + diphosphate. The catalysed reaction is L-threonyl-[protein] + ATP = 3-O-(5'-adenylyl)-L-threonyl-[protein] + diphosphate. It catalyses the reaction L-tyrosyl-[protein] + ATP = O-(5'-adenylyl)-L-tyrosyl-[protein] + diphosphate. The enzyme catalyses L-histidyl-[protein] + UTP = N(tele)-(5'-uridylyl)-L-histidyl-[protein] + diphosphate. It carries out the reaction L-seryl-[protein] + UTP = O-(5'-uridylyl)-L-seryl-[protein] + diphosphate. The catalysed reaction is L-tyrosyl-[protein] + UTP = O-(5'-uridylyl)-L-tyrosyl-[protein] + diphosphate. In terms of biological role, nucleotidyltransferase involved in the post-translational modification of proteins. It can catalyze the addition of adenosine monophosphate (AMP) or uridine monophosphate (UMP) to a protein, resulting in modifications known as AMPylation and UMPylation. The chain is Protein nucleotidyltransferase YdiU from Dechloromonas aromatica (strain RCB).